A 1132-amino-acid chain; its full sequence is Ubiquitin-associated protein 2 (1132 aa).

Residues 1-29 (MMTSVSNDRCRGAREKPQMPTAHAAQSQK) form a disordered region. Residues 8–17 (DRCRGAREKP) are compositionally biased toward basic and acidic residues. In terms of domain architecture, UBA spans 48 to 92 (KNDSDFEAKVKQLMEVTGKNQDECIVALHDCNGDVNKAINILLEG). Disordered regions lie at residues 95-202 (DTTS…YSES), 221-248 (GTDE…YGLK), 331-351 (NNQM…SPQS), 380-479 (LKPP…STVS), 602-679 (TSSA…VSTL), 713-749 (PLSQ…VEST), 875-919 (PYSG…LNPG), 996-1033 (GGYG…GSVY), 1040-1059 (DKQG…SALG), and 1087-1132 (PHSQ…YWTN). Basic and acidic residues predominate over residues 109–130 (FGRESSENKENREKRTEREASR). Arg-166 carries the omega-N-methylarginine modification. Basic residues predominate over residues 168-182 (KRARGRGFGRGRGRG). Polar residues-rich tracts occupy residues 233–244 (HSMSQEPPSKSS) and 331–340 (NNQMAPGTAN). Positions 341–351 (STSASSYSPQS) are enriched in low complexity. Residues 392-404 (SSAQQNDTASPPA) are compositionally biased toward polar residues. Phosphoserine is present on residues Ser-433 and Ser-440. Composition is skewed to low complexity over residues 436-448 (LSQL…HQTQ) and 602-618 (TSSA…SSSY). Polar residues predominate over residues 619–630 (DQSSVHTRIAYQ). Ser-631 bears the Phosphoserine mark. Low complexity predominate over residues 631-644 (SSASPPDSAPGSVA). The span at 652–662 (SQHTVDTTSSV) shows a compositional bias: polar residues. A compositionally biased stretch (low complexity) spans 713–722 (PLSQLSSSLS). A compositionally biased stretch (polar residues) spans 723-742 (GHQNSMTSAHATRSTSTPHT). Positions 897 to 914 (PAQAQQSQSQTHHTAQQP) are enriched in low complexity. The span at 1101–1115 (PSGSGQRSQPSSLQP) shows a compositional bias: low complexity. Residues 1116–1132 (KSQASKPTYGSAPYWTN) are compositionally biased toward polar residues.

In terms of assembly, may interact with ANXA2.

The protein resides in the nucleus. The protein localises to the chromosome. It localises to the cytoplasm. Its function is as follows. Recruits the ubiquitination machinery to RNA polymerase II for polyubiquitination, removal and degradation, when the transcription-coupled nucleotide excision repair (TC-NER) machinery fails to resolve DNA damage. May promote the degradation of ANXA2. This chain is Ubiquitin-associated protein 2, found in Mus musculus (Mouse).